A 160-amino-acid chain; its full sequence is MSILKKPDLSDPILRQKLAKGMGHNYYGEPAWPNDLLYMFPVVILGTIACLTGLAVLDPALVGEPADPFATPLEILPEWYLYPVFQILRIVPNKLLGIVLQSMIPLGLIAIPFIESVNKFQNPFRRPIATAVFLFGTVFTLYLGIGAALPIDKSLTLGLF.

The next 3 helical transmembrane spans lie at 36–56, 95–115, and 131–151; these read LLYMFPVVILGTIACLTGLAV, LLGIVLQSMIPLGLIAIPFIE, and AVFLFGTVFTLYLGIGAALPI.

The protein belongs to the cytochrome b family. PetD subfamily. The 4 large subunits of the cytochrome b6-f complex are cytochrome b6, subunit IV (17 kDa polypeptide, PetD), cytochrome f and the Rieske protein, while the 4 small subunits are PetG, PetL, PetM and PetN. The complex functions as a dimer.

The protein resides in the cellular thylakoid membrane. Functionally, component of the cytochrome b6-f complex, which mediates electron transfer between photosystem II (PSII) and photosystem I (PSI), cyclic electron flow around PSI, and state transitions. In Synechococcus elongatus (strain ATCC 33912 / PCC 7942 / FACHB-805) (Anacystis nidulans R2), this protein is Cytochrome b6-f complex subunit 4.